The chain runs to 208 residues: Imidazoleglycerol-phosphate dehydratase (208 aa).

It belongs to the imidazoleglycerol-phosphate dehydratase family.

It is found in the cytoplasm. The enzyme catalyses D-erythro-1-(imidazol-4-yl)glycerol 3-phosphate = 3-(imidazol-4-yl)-2-oxopropyl phosphate + H2O. Its pathway is amino-acid biosynthesis; L-histidine biosynthesis; L-histidine from 5-phospho-alpha-D-ribose 1-diphosphate: step 6/9. This is Imidazoleglycerol-phosphate dehydratase from Paenarthrobacter aurescens (strain TC1).